We begin with the raw amino-acid sequence, 133 residues long: VISGFYPDSVQVSWKKDRVDQSGVVLHSKQRNDSTFETVSYLTVPVVEWTTGDVYTCEVSHTGSRFNDRISMRYQKGGTVNLPVPGGNTPCTCPPSSCSGCMPKLVYQTDLNVTLENGGQLQYNCHQQACKIK.

In terms of domain architecture, Ig-like spans valine 1 to serine 71. N-linked (GlcNAc...) asparagine glycosylation is found at asparagine 32 and asparagine 112. The interval lysine 76–lysine 133 is secretory tail.

As to expression, expressed mainly in lymphoid tissues including spleen, epigonal organ and circulating lymphocytes.

It is found in the secreted. The chain is IgW chain C region, secreted form 2 from Heterodontus francisci (Horn shark).